A 308-amino-acid polypeptide reads, in one-letter code: Olfactory receptor 5H8 (308 aa).

Residues 1–28 (MDDENATLLTEFVLTGLTYQSEWKIPLF) are Extracellular-facing. The helical transmembrane segment at 29-49 (LAFLVIYLITIMANLGLIAVI) threads the bilayer. The Cytoplasmic segment spans residues 50–56 (WKDSHLH). The chain crosses the membrane as a helical span at residues 57–77 (IPMYLFLGSLAFVDAWLSSSV). At 78–98 (TPKMLISFLAKSMIISVSECK) the chain is on the extracellular side. Cys97 and Cys179 are oxidised to a cystine. The helical transmembrane segment at 99–119 (IQFFSFGISGTTECFLLATMA) threads the bilayer. Over 120 to 133 (YDRYVAICKPLLYP) the chain is Cytoplasmic. A helical transmembrane segment spans residues 134–154 (VIMTNGLCIWLLVLSFIGGFL). At 155 to 195 (HALIHEGILFRLTFCNSNIIHHFYCDIIPLLKISCTDPSIN) the chain is on the extracellular side. A helical transmembrane segment spans residues 196–216 (FLMLFILSGSIQVFTILTVLV). The Cytoplasmic portion of the chain corresponds to 217–238 (SYTFVLFTILKKKAKDIRKAFS). The helical transmembrane segment at 239–259 (TCGAHLLSVSLYYGPLLFMYV) threads the bilayer. Topologically, residues 260 to 270 (HPASPQADDQD) are extracellular. A helical membrane pass occupies residues 271–291 (MVESLFYTVIIPFLNPIIYSL). The Cytoplasmic portion of the chain corresponds to 292–308 (RNKQVIDSLTKTLKGNV).

Belongs to the G-protein coupled receptor 1 family.

It is found in the cell membrane. Odorant receptor. This is Olfactory receptor 5H8 from Homo sapiens (Human).